The following is a 205-amino-acid chain: Small ribosomal subunit protein uS4 (205 aa).

The segment covering 1–16 has biased composition (basic and acidic residues); the sequence is MSKRETTKYKIDRRMG. The disordered stretch occupies residues 1–46; sequence MSKRETTKYKIDRRMGENIWGRPKSPVNRRDYGPGQHGQRRKGKLS. Positions 94–157 constitute an S4 RNA-binding domain; the sequence is SRLDAVIYRA…KQLVLVLESV (64 aa).

Belongs to the universal ribosomal protein uS4 family. Part of the 30S ribosomal subunit. Contacts protein S5. The interaction surface between S4 and S5 is involved in control of translational fidelity.

Functionally, one of the primary rRNA binding proteins, it binds directly to 16S rRNA where it nucleates assembly of the body of the 30S subunit. Its function is as follows. With S5 and S12 plays an important role in translational accuracy. The polypeptide is Small ribosomal subunit protein uS4 (Bartonella quintana (strain Toulouse) (Rochalimaea quintana)).